A 244-amino-acid chain; its full sequence is uncharacterized protein (244 aa).

The first 18 residues, 1 to 18 (MQFSVLCKFLLLVTAVMA), serve as a signal peptide directing secretion. The Lumenal segment spans residues 19–223 (QTEYTPGFTT…TTIPSSAVHY (205 aa)). Low complexity-rich tracts occupy residues 55–65 (ETSTHSVTSTN) and 75–128 (TSHN…TTHV). The interval 55–128 (ETSTHSVTST…TTVVPPTTHV (74 aa)) is disordered. Residues 224-244 (ASPSGLLALVVMLISAFAFLA) traverse the membrane as a helical segment.

It localises to the endoplasmic reticulum membrane. This is an uncharacterized protein from Schizosaccharomyces pombe (strain 972 / ATCC 24843) (Fission yeast).